A 299-amino-acid chain; its full sequence is Tyrosine recombinase XerC (299 aa).

In terms of domain architecture, Core-binding (CB) spans methionine 1–glutamine 81. In terms of domain architecture, Tyr recombinase spans leucine 102 to aspartate 281. Catalysis depends on residues arginine 142, lysine 166, histidine 233, arginine 236, and histidine 259. Tyrosine 268 serves as the catalytic O-(3'-phospho-DNA)-tyrosine intermediate.

It belongs to the 'phage' integrase family. XerC subfamily. In terms of assembly, forms a cyclic heterotetrameric complex composed of two molecules of XerC and two molecules of XerD.

It is found in the cytoplasm. Functionally, site-specific tyrosine recombinase, which acts by catalyzing the cutting and rejoining of the recombining DNA molecules. The XerC-XerD complex is essential to convert dimers of the bacterial chromosome into monomers to permit their segregation at cell division. It also contributes to the segregational stability of plasmids. In Chromobacterium violaceum (strain ATCC 12472 / DSM 30191 / JCM 1249 / CCUG 213 / NBRC 12614 / NCIMB 9131 / NCTC 9757 / MK), this protein is Tyrosine recombinase XerC.